Here is a 610-residue protein sequence, read N- to C-terminus: Elongation factor 4 (610 aa).

One can recognise a tr-type G domain in the interval 11–193 (EKIRNFSIIA…QIVEKVPAPT (183 aa)). GTP-binding positions include 23–28 (DHGKST) and 140–143 (NKID).

The protein belongs to the TRAFAC class translation factor GTPase superfamily. Classic translation factor GTPase family. LepA subfamily.

The protein localises to the cell membrane. It carries out the reaction GTP + H2O = GDP + phosphate + H(+). In terms of biological role, required for accurate and efficient protein synthesis under certain stress conditions. May act as a fidelity factor of the translation reaction, by catalyzing a one-codon backward translocation of tRNAs on improperly translocated ribosomes. Back-translocation proceeds from a post-translocation (POST) complex to a pre-translocation (PRE) complex, thus giving elongation factor G a second chance to translocate the tRNAs correctly. Binds to ribosomes in a GTP-dependent manner. The protein is Elongation factor 4 of Streptococcus pyogenes serotype M49 (strain NZ131).